The sequence spans 189 residues: Adenine phosphoribosyltransferase (189 aa).

This sequence belongs to the purine/pyrimidine phosphoribosyltransferase family. Homodimer.

The protein resides in the cytoplasm. It catalyses the reaction AMP + diphosphate = 5-phospho-alpha-D-ribose 1-diphosphate + adenine. It participates in purine metabolism; AMP biosynthesis via salvage pathway; AMP from adenine: step 1/1. In terms of biological role, catalyzes a salvage reaction resulting in the formation of AMP, that is energically less costly than de novo synthesis. The protein is Adenine phosphoribosyltransferase of Frankia alni (strain DSM 45986 / CECT 9034 / ACN14a).